A 1204-amino-acid chain; its full sequence is TPR repeat-containing protein DDB_G0287999 (1204 aa).

Residues 32 to 48 (TTDTTTTTSTSTTTDTD) are compositionally biased toward low complexity. The segment at 32 to 55 (TTDTTTTTSTSTTTDTDTNSEKSN) is disordered. TPR repeat units lie at residues 263–296 (SKGLLLMIEFYIKIGDIDSAFKFFEVNFKDYKDL), 379–412 (NDSNNIIKNSSSKLEFNDDCVSNYKKLVNFDQLY), and 583–617 (IQHFVETALIYLINDNSYQEAVKLYIYFLKEGSVT). The interval 360–387 (QPPPQEQQLMDDDSNSNSNNDSNNIIKN) is disordered. Residues 374 to 387 (NSNSNNDSNNIIKN) are compositionally biased toward low complexity. Disordered stretches follow at residues 639–660 (NNNNNNNNNNNNNNNNNNNNNN) and 761–797 (DDNDNDNNNNNNNNNNNNNDDDDGGGHGGGDVFKTTT). The span at 766–778 (DNNNNNNNNNNNN) shows a compositional bias: low complexity.

The chain is TPR repeat-containing protein DDB_G0287999 from Dictyostelium discoideum (Social amoeba).